Reading from the N-terminus, the 108-residue chain is ATP-dependent Clp protease adapter protein ClpS (108 aa).

This sequence belongs to the ClpS family. As to quaternary structure, binds to the N-terminal domain of the chaperone ClpA.

Involved in the modulation of the specificity of the ClpAP-mediated ATP-dependent protein degradation. The chain is ATP-dependent Clp protease adapter protein ClpS from Leptospira borgpetersenii serovar Hardjo-bovis (strain JB197).